Here is a 906-residue protein sequence, read N- to C-terminus: Eukaryotic translation initiation factor 3 subunit C (906 aa).

The segment at 1–22 is disordered; it reads MSRFFANGSDSESESSEEEVQA. The segment covering 11–20 has biased composition (acidic residues); it reads SESESSEEEV. Serine 34, serine 165, serine 176, and serine 185 each carry phosphoserine. Residues 158 to 283 form a disordered region; the sequence is REAPDQESEA…KRPEDDEDGE (126 aa). A compositionally biased stretch (acidic residues) spans 162–186; the sequence is DQESEAEDEEAAQDSDGGDAGDDSD. A compositionally biased stretch (low complexity) spans 195–209; it reads EAAPKVAKTVPAKAA. A compositionally biased stretch (acidic residues) spans 211 to 237; sequence ADDDDSDDSIDWDSDSETETESSDDEN. A compositionally biased stretch (basic and acidic residues) spans 242–270; that stretch reads MRERFLKRTTEKEEKDDDKRKDKRKEQKI. One can recognise a PCI domain in the interval 641–817; it reads FHMHINLELL…ETVVMHRSEP (177 aa). Disordered stretches follow at residues 853-873 and 887-906; these read GNMG…NWGG and QRGR…IDEE. Over residues 894 to 906 the composition is skewed to low complexity; that stretch reads QQQQQQVQTIDEE.

Belongs to the eIF-3 subunit C family. As to quaternary structure, component of the eukaryotic translation initiation factor 3 (eIF-3) complex. The eIF-3 complex interacts with pix.

It is found in the cytoplasm. Component of the eukaryotic translation initiation factor 3 (eIF-3) complex, which is involved in protein synthesis of a specialized repertoire of mRNAs and, together with other initiation factors, stimulates binding of mRNA and methionyl-tRNAi to the 40S ribosome. The eIF-3 complex specifically targets and initiates translation of a subset of mRNAs involved in cell proliferation. In Drosophila ananassae (Fruit fly), this protein is Eukaryotic translation initiation factor 3 subunit C.